A 58-amino-acid polypeptide reads, in one-letter code: Large ribosomal subunit protein uL30 (58 aa).

The protein belongs to the universal ribosomal protein uL30 family. As to quaternary structure, part of the 50S ribosomal subunit.

The protein is Large ribosomal subunit protein uL30 of Azotobacter vinelandii (strain DJ / ATCC BAA-1303).